Reading from the N-terminus, the 197-residue chain is MADKVLKEKRKLFIHSMGEGTINGLLDELLQTRVLNQEEMEKVKRENATVMDKTRALIDSVIPKGAQACQICITYICEEDSYLAETLGLSAALQAVQDNPAMPTCSSPEGRIKLCFLEDAQRIWKQKLQRCHVQNTIIKWSERYTSGSFEMQWLFLRTNFIERFWRNILLLPLHKGSLYPRIPGLGKELQTGTHKLS.

The region spanning 1–91 is the CARD domain; that stretch reads MADKVLKEKR…YLAETLGLSA (91 aa).

In terms of assembly, homooligomer. Interacts with CASP1, CASP4, CARD8 and RIPK2. In terms of tissue distribution, widely expressed. Expressed at higher level in placenta, spleen, lymph node and bone marrow. Weakly or not expressed in thymus.

Caspase inhibitor. Acts as a regulator of procaspase-1/CASP1 activation implicated in the regulation of the proteolytic maturation of pro-interleukin-1 beta (IL1B) and its release during inflammation. Inhibits the release of IL1B in response to LPS in monocytes. Also induces NF-kappa-B activation during the pro-inflammatory cytokine response. Also able to inhibit CASP1-mediated neuronal cell death, TNF-alpha, hypoxia-, UV-, and staurosporine-mediated cell death but not ER stress-mediated cell death. Acts by preventing activation of caspases CASP1 and CASP4, possibly by preventing the interaction between CASP1 and RIPK2. The sequence is that of Caspase recruitment domain-containing protein 16 (CARD16) from Homo sapiens (Human).